A 288-amino-acid chain; its full sequence is Glucose-1-phosphate thymidylyltransferase (288 aa).

Glycine 8 serves as a coordination point for dTDP-alpha-D-glucose. Residues glycine 8, glycine 11, threonine 12, arginine 13, lysine 23, glutamine 24, glutamine 80, glycine 85, and aspartate 108 each coordinate dTTP. Positions 23, 24, 80, 85, 108, 109, 143, 158, 159, 169, and 222 each coordinate dTDP-alpha-D-glucose. A Mg(2+)-binding site is contributed by aspartate 108. Aspartate 222 is a binding site for Mg(2+).

The protein belongs to the glucose-1-phosphate thymidylyltransferase family. Requires Mg(2+) as cofactor.

It carries out the reaction dTTP + alpha-D-glucose 1-phosphate + H(+) = dTDP-alpha-D-glucose + diphosphate. It functions in the pathway carbohydrate biosynthesis; dTDP-L-rhamnose biosynthesis. Functionally, catalyzes the conversion of glucose-1-phosphate and dTTP to dTDP-glucose and pyrophosphate. Involved in the biosynthesis of the dTDP-L-rhamnose which is a component of the critical linker, D-N-acetylglucosamine-L-rhamnose disaccharide, which connects the galactan region of arabinogalactan to peptidoglycan via a phosphodiester linkage. The protein is Glucose-1-phosphate thymidylyltransferase (rmlA) of Mycobacterium tuberculosis (strain CDC 1551 / Oshkosh).